Consider the following 478-residue polypeptide: JmjC domain-containing histone demethylation protein 1 (478 aa).

The PHD-type zinc finger occupies 5–68 (SESCPLCKVH…IYHCPECVPK (64 aa)). The JmjC domain occupies 217 to 383 (SDVAKLGVDF…MQLKINEIER (167 aa)). Threonine 266 is a binding site for substrate. The Fe cation site is built by histidine 269 and aspartate 271. Lysine 286 contacts substrate. Histidine 351 serves as a coordination point for Fe cation.

The protein belongs to the JHDM1 histone demethylase family. The cofactor is Fe(2+).

The protein resides in the nucleus. It carries out the reaction N(6),N(6)-dimethyl-L-lysyl(36)-[histone H3] + 2 2-oxoglutarate + 2 O2 = L-lysyl(36)-[histone H3] + 2 formaldehyde + 2 succinate + 2 CO2. Histone demethylase that specifically demethylates 'Lys-36' of histone H3, thereby playing a central role in histone code. The polypeptide is JmjC domain-containing histone demethylation protein 1 (JHD1) (Candida albicans (strain SC5314 / ATCC MYA-2876) (Yeast)).